A 716-amino-acid chain; its full sequence is Fusoxypene synthase (716 aa).

A sesterterpenoid synthase region spans residues leucine 4 to threonine 328. Residue aspartate 96 coordinates Mg(2+). Aspartate 96 provides a ligand contact to substrate. The segment at arginine 187–asparagine 190 is substrate. Residue asparagine 231 coordinates substrate. Residues serine 235 to glutamate 239 form a substrate region. Residues tryptophan 329–cysteine 711 form a geranylfarnesyl diphosphate synthase region. 3 residues coordinate isopentenyl diphosphate: lysine 422, arginine 425, and histidine 454. Positions 461 and 465 each coordinate Mg(2+). Arginine 470 provides a ligand contact to dimethylallyl diphosphate. Arginine 471 is a binding site for isopentenyl diphosphate. Dimethylallyl diphosphate is bound by residues lysine 548, threonine 549, glutamine 587, asparagine 594, and lysine 602.

It in the N-terminal section; belongs to the terpene synthase family. This sequence in the C-terminal section; belongs to the FPP/GGPP synthase family.

It catalyses the reaction 4 isopentenyl diphosphate + dimethylallyl diphosphate = (2E,6E,10E,14E)-geranylfarnesyl diphosphate + 4 diphosphate. It carries out the reaction (2E,6E,10E,14E)-geranylfarnesyl diphosphate = fusoxypene A + diphosphate. The catalysed reaction is (2E,6E,10E,14E)-geranylfarnesyl diphosphate = fusoxypene B + diphosphate. The enzyme catalyses (2E,6E,10E,14E)-geranylfarnesyl diphosphate = fusoxypene C + diphosphate. It catalyses the reaction (2E,6E,10E,14E)-geranylfarnesyl diphosphate = (-)-astellatene + diphosphate. In terms of biological role, bifunctional sesterterpenoid synthase that performs both prenyl transferase and terpene cyclase activity, converting isopentenyl diphosphate and dimethylallyl diphosphate into geranylfarnesyl diphosphate (GFPP) and then converting GFPP into the enantiomeric sesterterpenes with a 5-6-7-3-5 ring system fusoxypene A, fusoxypene B, fusoxypene C and (-)-astellatene. This chain is Fusoxypene synthase, found in Fusarium oxysporum (Fusarium vascular wilt).